A 1281-amino-acid chain; its full sequence is Enterobactin synthase component F (1281 aa).

The segment at 1 to 301 (MSQHLPLVAA…NVLPLGIHIA (301 aa)) is elongation/condensation. The segment at 486-891 (SYREMHEQVV…ALPDVKQAVT (406 aa)) is adenylation. One can recognise a Carrier domain in the interval 975 to 1050 (APKAGSETII…KLATIIDGEE (76 aa)). O-(pantetheine 4'-phosphoryl)serine is present on Ser1010. Residues 1070–1281 (PTLFCFHPAS…GPIIRATLNR (212 aa)) are thioesterase. The Proton acceptor; for thioesterase activity role is filled by His1259.

This sequence belongs to the ATP-dependent AMP-binding enzyme family. EntF subfamily. In terms of assembly, proteins EntB, EntD, EntE and EntF are the component of the enterobactin synthase. Components probably do not form a stable complex. EntF acts as a catalytic monomer. It depends on pantetheine 4'-phosphate as a cofactor. Post-translationally, 4'-phosphopantetheine is transferred from CoA to a specific serine of apo-EntF by EntD. Holo-EntF so formed is then acylated with seryl-AMP.

Its subcellular location is the cytoplasm. The enzyme catalyses 3 2,3-dihydroxybenzoate + 3 L-serine + 6 ATP = enterobactin + 6 AMP + 6 diphosphate + 4 H(+). It carries out the reaction holo-[peptidyl-carrier protein] + L-serine + ATP = L-seryl-[peptidyl-carrier protein] + AMP + diphosphate. Its pathway is siderophore biosynthesis; enterobactin biosynthesis. In terms of biological role, involved in the biosynthesis of the siderophore enterobactin (enterochelin), which is a macrocyclic trimeric lactone of N-(2,3-dihydroxybenzoyl)-serine. EntF catalyzes the activation of L-serine via ATP-dependent PPi exchange reaction to form seryladenylate. Activated L-serine is loaded onto the peptidyl carrier domain via a thioester linkage to the phosphopanthetheine moiety, forming seryl-S-Ppant-EntF. EntF acts then as the sole catalyst for the formation of the three amide and three ester linkages found in enterobactin, using seryladenylate and 2,3-dihydroxybenzoate-S-Ppant-EntB (DHB-S-Ppant-EntB) as substrates, via the formation of a DHB-Ser-S-Ppant-EntF intermediate. The protein is Enterobactin synthase component F (entF) of Shigella flexneri.